Here is a 518-residue protein sequence, read N- to C-terminus: Light-independent protochlorophyllide reductase subunit B (518 aa).

[4Fe-4S] cluster is bound at residue Asp36. The active-site Proton donor is the Asp285. Residue 420–421 (GL) coordinates substrate.

The protein belongs to the ChlB/BchB/BchZ family. In terms of assembly, protochlorophyllide reductase is composed of three subunits; BchL, BchN and BchB. Forms a heterotetramer of two BchB and two BchN subunits. [4Fe-4S] cluster serves as cofactor.

It carries out the reaction chlorophyllide a + oxidized 2[4Fe-4S]-[ferredoxin] + 2 ADP + 2 phosphate = protochlorophyllide a + reduced 2[4Fe-4S]-[ferredoxin] + 2 ATP + 2 H2O. Its pathway is porphyrin-containing compound metabolism; bacteriochlorophyll biosynthesis (light-independent). Its function is as follows. Component of the dark-operative protochlorophyllide reductase (DPOR) that uses Mg-ATP and reduced ferredoxin to reduce ring D of protochlorophyllide (Pchlide) to form chlorophyllide a (Chlide). This reaction is light-independent. The NB-protein (BchN-BchB) is the catalytic component of the complex. In Bradyrhizobium sp. (strain ORS 278), this protein is Light-independent protochlorophyllide reductase subunit B.